Reading from the N-terminus, the 251-residue chain is uncharacterized protein (251 aa).

A signal peptide spans 1 to 15; it reads MSAISSLVLIGWAMC. N-linked (GlcNAc...) asparagine glycosylation is found at N225 and N242.

This is an uncharacterized protein from Encephalitozoon cuniculi (strain GB-M1) (Microsporidian parasite).